Reading from the N-terminus, the 354-residue chain is Kelch domain-containing protein 8B (354 aa).

8 Kelch repeats span residues 1-31 (MATG…FQDG), 32-79 (HLLV…VLGK), 81-127 (VLVV…ERDG), 128-175 (MVYA…LHGN), 176-222 (KIYV…MAEG), 224-281 (VFSL…SLGD), 282-329 (HVVA…QAGP), and 331-354 (LFAI…RDGV).

It localises to the cytoplasm. Its subcellular location is the midbody. Functionally, involved in pinching off the separated nuclei at the cleavage furrow and in cytokinesis. Required for mitotic integrity and maintenance of chromosomal stability. Protects cells against mitotic errors, centrosomal amplification, micronucleus formation and aneuploidy. Plays a key role of midbody function involving abscission of the daughter cells during cytokinesis and appropriate chromosomal and nuclear segregation into the daughter cells. The protein is Kelch domain-containing protein 8B (KLHDC8B) of Bos taurus (Bovine).